A 353-amino-acid chain; its full sequence is Thiamine-phosphate synthase (353 aa).

The interval 1–128 is unknown; it reads MKSMPFAPIA…AASAAAIRYG (128 aa). A thiamine-phosphate synthase region spans residues 129–353; sequence LYDLEVTVLQ…TSLQLLEALR (225 aa). 4-amino-2-methyl-5-(diphosphooxymethyl)pyrimidine is bound by residues 185-189 and Asn217; that span reads QYRNK. Asp218 and Asp237 together coordinate Mg(2+). Ser256 is a binding site for 4-amino-2-methyl-5-(diphosphooxymethyl)pyrimidine. 282–284 serves as a coordination point for 2-[(2R,5Z)-2-carboxy-4-methylthiazol-5(2H)-ylidene]ethyl phosphate; the sequence is TAT. Lys285 contributes to the 4-amino-2-methyl-5-(diphosphooxymethyl)pyrimidine binding site. Residue Gly312 participates in 2-[(2R,5Z)-2-carboxy-4-methylthiazol-5(2H)-ylidene]ethyl phosphate binding.

The protein belongs to the thiamine-phosphate synthase family. It depends on Mg(2+) as a cofactor.

It catalyses the reaction 2-[(2R,5Z)-2-carboxy-4-methylthiazol-5(2H)-ylidene]ethyl phosphate + 4-amino-2-methyl-5-(diphosphooxymethyl)pyrimidine + 2 H(+) = thiamine phosphate + CO2 + diphosphate. The enzyme catalyses 2-(2-carboxy-4-methylthiazol-5-yl)ethyl phosphate + 4-amino-2-methyl-5-(diphosphooxymethyl)pyrimidine + 2 H(+) = thiamine phosphate + CO2 + diphosphate. It carries out the reaction 4-methyl-5-(2-phosphooxyethyl)-thiazole + 4-amino-2-methyl-5-(diphosphooxymethyl)pyrimidine + H(+) = thiamine phosphate + diphosphate. The protein operates within cofactor biosynthesis; thiamine diphosphate biosynthesis; thiamine phosphate from 4-amino-2-methyl-5-diphosphomethylpyrimidine and 4-methyl-5-(2-phosphoethyl)-thiazole: step 1/1. In terms of biological role, condenses 4-methyl-5-(beta-hydroxyethyl)thiazole monophosphate (THZ-P) and 2-methyl-4-amino-5-hydroxymethyl pyrimidine pyrophosphate (HMP-PP) to form thiamine monophosphate (TMP). This Prochlorococcus marinus (strain MIT 9313) protein is Thiamine-phosphate synthase.